The following is a 308-amino-acid chain: Cytochrome b (308 aa).

The next 4 helical transmembrane spans lie at 1–21, 45–66, 81–101, and 146–166; these read SGSLLGMCLIVRIITGLFLAA, WLIRNLHANGASLFFICIYLHI, WNIGVILLLALMATAFVGYVL, and FFALHFLLPFVIAGLTLVHLT. Residues H51 and H65 each coordinate heme b. Residues H150 and H164 each contribute to the heme b site. H169 is an a ubiquinone binding site. 3 helical membrane-spanning segments follow: residues 194–214, 256–276, and 288–308; these read TKDVLGFALLLTPLIALALFS, LGGVLALAASVLVLFLIPLLH, and LSQILFWALVANLLVLTWVGS.

Belongs to the cytochrome b family. In terms of assembly, the cytochrome bc1 complex contains 11 subunits: 3 respiratory subunits (MT-CYB, CYC1 and UQCRFS1), 2 core proteins (UQCRC1 and UQCRC2) and 6 low-molecular weight proteins (UQCRH/QCR6, UQCRB/QCR7, UQCRQ/QCR8, UQCR10/QCR9, UQCR11/QCR10 and a cleavage product of UQCRFS1). This cytochrome bc1 complex then forms a dimer. The cofactor is heme b.

It is found in the mitochondrion inner membrane. Functionally, component of the ubiquinol-cytochrome c reductase complex (complex III or cytochrome b-c1 complex) that is part of the mitochondrial respiratory chain. The b-c1 complex mediates electron transfer from ubiquinol to cytochrome c. Contributes to the generation of a proton gradient across the mitochondrial membrane that is then used for ATP synthesis. The sequence is that of Cytochrome b (MT-CYB) from Garritornis isidorei (Papuan babbler).